Reading from the N-terminus, the 36-residue chain is F420-dependent NADP reductase (36 aa).

9 to 12 contributes to the NADP(+) binding site; it reads TGNI.

This sequence belongs to the F420-dependent NADP reductase family. In terms of assembly, homotetramer.

It carries out the reaction reduced coenzyme F420-(gamma-L-Glu)(n) + NADP(+) = oxidized coenzyme F420-(gamma-L-Glu)(n) + NADPH + 2 H(+). Catalyzes the reduction of NADP(+) with F420H(2) via hydride transfer, and the reverse reaction, i.e. the reduction of F420 with NADPH. In M.organophilum, an alcohol-fermenting methanogen containing an NADP-dependent alcohol dehydrogenase, is probably involved in the regeneration of F420H(2) required for CO(2) reduction to methane. Thus, during growth on alcohol and CO(2), the F420-dependent NADP reductase probably has the function of coupling the NADP-dependent oxidation of the alcohol to the aldehyde with the F420-dependent reduction of CO(2) to methane. The sequence is that of F420-dependent NADP reductase (fno) from Methanogenium organophilum.